We begin with the raw amino-acid sequence, 383 residues long: Probable lipid transporter atnI (383 aa).

The next 2 helical transmembrane spans lie at 46–66 (VLFSVLFGLTTIIHIVQAIMF) and 71–91 (AWVVIMSSLWELIAFIMRSLF). Residue N94 is glycosylated (N-linked (GlcNAc...) asparagine). Transmembrane regions (helical) follow at residues 104–124 (FTIFFLLAPIWVNAFLYMTLG), 144–164 (FGHIFVWLEILAFIIQLVGAA), 182–202 (IYMGGIGVQELFILIFTGLFI), 231–251 (WLFYAIYASLFLITVRIIFRL), and 269–289 (WFEYVWDAAPIFICLAILNVA). The segment at 305 to 383 (VSRKEKKQRK…YDNRGNEVRP (79 aa)) is disordered. The segment covering 307-316 (RKEKKQRKRE) has biased composition (basic residues). Over residues 317–329 (KKEAKIAEKEAKK) the composition is skewed to basic and acidic residues.

This sequence belongs to the lipid-translocating exporter (LTE) (TC 9.A.26.1) family.

The protein localises to the membrane. It functions in the pathway secondary metabolite biosynthesis. In terms of biological role, probable lipid transporter; part of the gene cluster that mediates the biosynthesis of aspercryptins, linear lipopeptides built from six amino acids including 2 highly unusual and nonproteogenic amino acids, 2-amino-octanoic acid (2aoa) and 2-amino-dodecanol (2adol). The core structure of aspercryptins is as follows: Ser/Ala-Thr-Ile/Val-2aoa-Asn-2adol. The first step of aspercryptin biosynthesis is the generation of the fatty acid precursors, octanoic and dodecanoic acids, by the FAS subunits atnF and atnM. The fatty acid precursors are likely transformed into the corresponding alpha-amino fatty acids in three steps. First, they are hydroxylated by the cytochrome P450 monooxygenase atnE, then oxidized to the corresponding alpha-keto acids by the NAD(P)-dependent oxidoreductase atnD, and finally converted to the alpha-amino fatty acids by the PLP-dependent aminotransferases atnH or atnJ. the alpha-amino fatty acids, 2-amino-octanoic and 2-amino-dodecanoic acids, are recognized, activated, and covalently tethered to the NRPS atnA by its fourth and sixth adenylation domains. The second module of atnA is the Thr module and contains an epimerase (E) domain responsible for the epimerization of Thr to D-allo-Thr. Additionally, despite atnA having only one epimerase domain, the first amino acid of aspercryptin A1 is D-Ser, suggesting that serine is either loaded directly as D-Ser on the first module or that the epimerase domain in the threonine module epimerizes both L-Ser and L-Thr. After condensation of the hexapeptide of aspercryptin, the C-terminal reductase (TE) domain might be involved in the reductive release and production of the aldehyde hexapeptide. Further reduction would generate aspercryptins. The variety of aspercryptins produced reflects the flexibility of the atnA NRPS, allowing incorporation of alanine instead of serine, valine for isoleucine, and a C10 fatty amino alcohol instead of the C12 version. AtnB seems to be involved in the selectivity for Ile versus Val by the third module. Moreover, type B, C and D aspercryptins have an additional N-terminal cichorine, acetyl and propionyl group respectively. The chain is Probable lipid transporter atnI from Emericella nidulans (strain FGSC A4 / ATCC 38163 / CBS 112.46 / NRRL 194 / M139) (Aspergillus nidulans).